A 378-amino-acid chain; its full sequence is Erythronate-4-phosphate dehydrogenase (378 aa).

Residues serine 45 and threonine 66 each coordinate substrate. NAD(+)-binding residues include aspartate 146 and threonine 175. Arginine 208 is a catalytic residue. Aspartate 232 serves as a coordination point for NAD(+). The active site involves glutamate 237. The active-site Proton donor is histidine 254. Position 257 (glycine 257) interacts with NAD(+). Tyrosine 258 contributes to the substrate binding site.

The protein belongs to the D-isomer specific 2-hydroxyacid dehydrogenase family. PdxB subfamily. As to quaternary structure, homodimer.

It is found in the cytoplasm. The catalysed reaction is 4-phospho-D-erythronate + NAD(+) = (R)-3-hydroxy-2-oxo-4-phosphooxybutanoate + NADH + H(+). It functions in the pathway cofactor biosynthesis; pyridoxine 5'-phosphate biosynthesis; pyridoxine 5'-phosphate from D-erythrose 4-phosphate: step 2/5. Functionally, catalyzes the oxidation of erythronate-4-phosphate to 3-hydroxy-2-oxo-4-phosphonooxybutanoate. The sequence is that of Erythronate-4-phosphate dehydrogenase from Escherichia coli (strain 55989 / EAEC).